Here is a 174-residue protein sequence, read N- to C-terminus: UPF0340 protein SE_1711 (174 aa).

This sequence belongs to the UPF0340 family.

The sequence is that of UPF0340 protein SE_1711 from Staphylococcus epidermidis (strain ATCC 12228 / FDA PCI 1200).